The primary structure comprises 121 residues: Large ribosomal subunit protein bL19 (121 aa).

It belongs to the bacterial ribosomal protein bL19 family.

Its function is as follows. This protein is located at the 30S-50S ribosomal subunit interface and may play a role in the structure and function of the aminoacyl-tRNA binding site. In Legionella pneumophila (strain Paris), this protein is Large ribosomal subunit protein bL19.